The chain runs to 543 residues: Intermediate filament protein ifb-2 (543 aa).

Over residues 1-10 (MSAVSYSMHR) the composition is skewed to polar residues. The disordered stretch occupies residues 1 to 27 (MSAVSYSMHRTTTTTSSSSHGGVSAGH). Positions 1–42 (MSAVSYSMHRTTTTTSSSSHGGVSAGHAAEEFVASAEREKQE) are head. The IF rod domain maps to 39-388 (EKQEMQQLNS…KLVESEEGRF (350 aa)). The segment at 43–74 (MQQLNSRLEVYISRVRQLEDRNKELVIELDTL) is coil 1A. The interval 75–88 (RGSLGNDIGQIKFK) is linker 1. The interval 89–223 (FNDSLVKVRR…RIHSQEITEL (135 aa)) is coil 1B. Positions 224-240 (RTLLAQAPADTREFFKN) are linker 12. Residues 241–387 (ELALAIREIK…RKLVESEEGR (147 aa)) are coil 2. The interval 388 to 542 (FTHVGQGVVV…SHIQTTVASS (155 aa)) is tail. The region spanning 420 to 538 (TRSSFKRHAK…IEKASHIQTT (119 aa)) is the LTD domain.

The protein belongs to the intermediate filament family. As to expression, expression is restricted to a discrete circumferential subapical layer within the intestinal terminal web (known as the 'endotube'); this layer joins directly to the apical junction complexes that connect adjacent gut cells.

It localises to the cytoplasm. Its function is as follows. Cytoplasmic intermediate filaments provide mechanical strength to cells. Not essential protein. Component of the terminal web (organelle-depleted, intermediate filament-rich layer of cytoplasm that underlies the apical microvilli of polarized epithelial cells) in embryonic through to adult gut cells. Correct localization of filaments requires let-413. In Caenorhabditis elegans, this protein is Intermediate filament protein ifb-2 (ifb-2).